Here is a 404-residue protein sequence, read N- to C-terminus: XK-related protein 8 (404 aa).

Helical transmembrane passes span 14 to 34, 44 to 64, 167 to 187, 206 to 226, 227 to 247, 263 to 283, 292 to 312, and 319 to 339; these read FVFS…DVWV, FFWF…VQMF, AVQF…VVDY, SLIY…ALAL, FASV…LVFV, GEWL…FNVA, AIYH…WWCC, and EPYA…GLLF.

The protein belongs to the XK family.

The protein resides in the cell membrane. It catalyses the reaction a 1,2-diacyl-sn-glycero-3-phospho-L-serine(in) = a 1,2-diacyl-sn-glycero-3-phospho-L-serine(out). Phospholipid scramblase that promotes phosphatidylserine exposure on apoptotic cell surface, possibly by mediating phospholipid scrambling. Phosphatidylserine is a specific marker only present at the surface of apoptotic cells and acts as a specific signal for engulfment. The polypeptide is XK-related protein 8 (Tetraodon nigroviridis (Spotted green pufferfish)).